Here is a 325-residue protein sequence, read N- to C-terminus: Thiamine-monophosphate kinase (325 aa).

The Mg(2+) site is built by Asp30, Ser45, Thr46, and Asp47. A substrate-binding site is contributed by His54. The Mg(2+) site is built by Asp75 and Asp122. Residues 121–122 (GD) and Arg146 contribute to the ATP site. A Mg(2+)-binding site is contributed by Asp212. Ser214 provides a ligand contact to ATP. Residue Asp215 coordinates Mg(2+). Substrate is bound by residues Glu263 and Tyr319.

This sequence belongs to the thiamine-monophosphate kinase family.

It carries out the reaction thiamine phosphate + ATP = thiamine diphosphate + ADP. It functions in the pathway cofactor biosynthesis; thiamine diphosphate biosynthesis; thiamine diphosphate from thiamine phosphate: step 1/1. Its activity is regulated as follows. Is markedly activated by the monovalent cations K(+), NH(4)(+), and Rb(+). Is significantly inhibited by ADP, AMP, p-chloromercuribenzoate, N-ethylmaleimide, pyrophosphate, and EDTA. Functionally, catalyzes the ATP-dependent phosphorylation of thiamine-monophosphate (TMP) to form thiamine-pyrophosphate (TPP), the active form of vitamin B1. Cannot use thiamine as substrate. Is highly specific for ATP as phosphate donor. The chain is Thiamine-monophosphate kinase (thiL) from Escherichia coli (strain K12).